The chain runs to 205 residues: Small ribosomal subunit protein uS4 (205 aa).

The segment at 18–46 is disordered; it reads NIWGRPKSPVNRREYGPGQHGQRRKGKLS. The S4 RNA-binding domain maps to 94–154; the sequence is RRLDTVVFRA…EASKQLAVVL (61 aa).

It belongs to the universal ribosomal protein uS4 family. Part of the 30S ribosomal subunit. Contacts protein S5. The interaction surface between S4 and S5 is involved in control of translational fidelity.

Functionally, one of the primary rRNA binding proteins, it binds directly to 16S rRNA where it nucleates assembly of the body of the 30S subunit. With S5 and S12 plays an important role in translational accuracy. The polypeptide is Small ribosomal subunit protein uS4 (Bradyrhizobium sp. (strain ORS 278)).